The primary structure comprises 54 residues: Ovomucoid (54 aa).

The Kazal-like domain maps to 4-54 (VDCSGYPTHACTLELKPLCGSDNQTYSNKCGFCNAVAQSNGTLTLSHFGKC). Cystine bridges form between Cys6-Cys36, Cys14-Cys33, and Cys22-Cys54. N-linked (GlcNAc...) asparagine glycosylation occurs at Asn43.

The protein resides in the secreted. The chain is Ovomucoid from Leipoa ocellata (Malleefowl).